The sequence spans 559 residues: Proline--tRNA ligase (559 aa).

The protein belongs to the class-II aminoacyl-tRNA synthetase family. ProS type 1 subfamily. Homodimer.

It is found in the cytoplasm. It carries out the reaction tRNA(Pro) + L-proline + ATP = L-prolyl-tRNA(Pro) + AMP + diphosphate. In terms of biological role, catalyzes the attachment of proline to tRNA(Pro) in a two-step reaction: proline is first activated by ATP to form Pro-AMP and then transferred to the acceptor end of tRNA(Pro). As ProRS can inadvertently accommodate and process non-cognate amino acids such as alanine and cysteine, to avoid such errors it has two additional distinct editing activities against alanine. One activity is designated as 'pretransfer' editing and involves the tRNA(Pro)-independent hydrolysis of activated Ala-AMP. The other activity is designated 'posttransfer' editing and involves deacylation of mischarged Ala-tRNA(Pro). The misacylated Cys-tRNA(Pro) is not edited by ProRS. This chain is Proline--tRNA ligase, found in Ruthia magnifica subsp. Calyptogena magnifica.